Consider the following 528-residue polypeptide: Inorganic phosphate transporter 1-2 (528 aa).

The Cytoplasmic segment spans residues 1–24; that stretch reads MAGSQLNVLVKLDQAKTQWYHFMA. The helical transmembrane segment at 25–45 threads the bilayer; sequence IVIAGMGFFTDAYDLFCIALV. The Extracellular portion of the chain corresponds to 46–71; sequence TKLLGRLYYTDITKPNPGTLPPNVSS. Residues 72–92 form a helical membrane-spanning segment; it reads AVTGVALCGTLAGQLFFGWLG. At 93 to 99 the chain is on the cytoplasmic side; that stretch reads DKLGRKS. Residues 100-120 form a helical membrane-spanning segment; sequence VYGFTLILMVVCSIASGLSFG. Residues 121–125 lie on the Extracellular side of the membrane; that stretch reads HTPKS. The helical transmembrane segment at 126–146 threads the bilayer; it reads VIATLCFFRFWLGFGIGGDYP. Residues 147 to 163 lie on the Cytoplasmic side of the membrane; it reads LSATIMSEYASKKTRGA. A helical transmembrane segment spans residues 164-184; that stretch reads FIAAVFAMQGFGILFGAIVAL. The Extracellular segment spans residues 185–212; the sequence is VVSAGFRHAYPAPSYAQNPAASLAPQAD. Residues 213–232 form a helical membrane-spanning segment; it reads YTWRLILMFGTIPAGLTYYW. Residues 233–296 lie on the Cytoplasmic side of the membrane; it reads RMKMPETARY…RQFMKRHGMH (64 aa). A helical membrane pass occupies residues 297–317; that stretch reads LLATTSTWFLLDIAFYSQNLF. Residues 318-348 lie on the Extracellular side of the membrane; sequence QKDIFSKVGWIPPAKTMNALEELYRISRAQA. Residues 349–369 traverse the membrane as a helical segment; the sequence is LIALCGTIPGYWFTVAFIDIV. The Cytoplasmic segment spans residues 370-371; it reads GR. A helical transmembrane segment spans residues 372-392; that stretch reads FWIQIMGFFMMTVFMLALGVP. At 393–405 the chain is on the extracellular side; that stretch reads YDHWTHPAHHTGF. The helical transmembrane segment at 406-426 threads the bilayer; sequence VVLYALTFFFANFGPNSTTFI. At 427–442 the chain is on the cytoplasmic side; that stretch reads VPAEIFPARLRSTCHG. The helical transmembrane segment at 443–463 threads the bilayer; the sequence is ISAASGKAGAIIGAFGFLYAA. The Extracellular segment spans residues 464 to 481; sequence QDQHNPDAGYSRGIGIRN. The helical transmembrane segment at 482–502 threads the bilayer; that stretch reads ALFVLAGTNFLGMLMTLLVPE. Topologically, residues 503–528 are cytoplasmic; the sequence is SKGLSLEEMSKDNVVDETAQEAIAQA.

This sequence belongs to the major facilitator superfamily. Phosphate:H(+) symporter (TC 2.A.1.9) family. As to expression, expressed in the root stele and leaf phloem and xylem.

Its subcellular location is the membrane. Low-affinity transporter for inorganic phosphate (Pi). Involved in internal Pi transport from root to shoot. Responsible for most of the PHR2-mediated accumulation of excess shoot Pi under abundant Pi conditions, but not for PHO2-mediated accumulation of excess shoot Pi. Acts as a H(+):phosphate symporter. The polypeptide is Inorganic phosphate transporter 1-2 (PTH1-2) (Oryza sativa subsp. japonica (Rice)).